The primary structure comprises 293 residues: Elongation factor Ts (293 aa).

The tract at residues Thr80–Val83 is involved in Mg(2+) ion dislocation from EF-Tu.

Belongs to the EF-Ts family.

It is found in the cytoplasm. Associates with the EF-Tu.GDP complex and induces the exchange of GDP to GTP. It remains bound to the aminoacyl-tRNA.EF-Tu.GTP complex up to the GTP hydrolysis stage on the ribosome. The protein is Elongation factor Ts of Burkholderia cenocepacia (strain ATCC BAA-245 / DSM 16553 / LMG 16656 / NCTC 13227 / J2315 / CF5610) (Burkholderia cepacia (strain J2315)).